A 785-amino-acid chain; its full sequence is E3 UFM1-protein ligase 1 homolog (785 aa).

Over residues M396 to D416 the composition is skewed to basic and acidic residues. Residues M396 to K473 form a disordered region. Positions K439–R449 are enriched in basic residues.

It belongs to the UFL1 family.

E3 UFM1-protein ligase that mediates ufmylation of target proteins. The polypeptide is E3 UFM1-protein ligase 1 homolog (Culex quinquefasciatus (Southern house mosquito)).